We begin with the raw amino-acid sequence, 400 residues long: Elongation factor Tu (400 aa).

The tr-type G domain maps to 10–209 (KPHVNVGTIG…AVDSYIPTPE (200 aa)). The tract at residues 19 to 26 (GHVDHGKT) is G1. GTP is bound at residue 19 to 26 (GHVDHGKT). Position 26 (Thr26) interacts with Mg(2+). The segment at 60–64 (GITIA) is G2. The segment at 81 to 84 (DCPG) is G3. Residues 81–85 (DCPGH) and 136–139 (NKVD) each bind GTP. Positions 136–139 (NKVD) are G4. Positions 174-176 (SAL) are G5.

The protein belongs to the TRAFAC class translation factor GTPase superfamily. Classic translation factor GTPase family. EF-Tu/EF-1A subfamily. In terms of assembly, monomer.

It localises to the cytoplasm. The enzyme catalyses GTP + H2O = GDP + phosphate + H(+). Its function is as follows. GTP hydrolase that promotes the GTP-dependent binding of aminoacyl-tRNA to the A-site of ribosomes during protein biosynthesis. The sequence is that of Elongation factor Tu from Moorella thermoacetica (strain ATCC 39073 / JCM 9320).